A 397-amino-acid polypeptide reads, in one-letter code: Phosphoglycerate kinase (397 aa).

Substrate-binding positions include 21–23, arginine 37, 60–63, arginine 119, and arginine 152; these read DFN and HLGR. Residues lysine 203, glycine 294, glutamate 325, and 354–357 each bind ATP; that span reads GGDS.

The protein belongs to the phosphoglycerate kinase family. As to quaternary structure, monomer.

It localises to the cytoplasm. It carries out the reaction (2R)-3-phosphoglycerate + ATP = (2R)-3-phospho-glyceroyl phosphate + ADP. It functions in the pathway carbohydrate degradation; glycolysis; pyruvate from D-glyceraldehyde 3-phosphate: step 2/5. The chain is Phosphoglycerate kinase from Chlorobium phaeobacteroides (strain DSM 266 / SMG 266 / 2430).